The sequence spans 157 residues: Prefoldin subunit alpha (157 aa).

The protein belongs to the prefoldin subunit alpha family. In terms of assembly, heterohexamer of two alpha and four beta subunits.

The protein localises to the cytoplasm. Its function is as follows. Molecular chaperone capable of stabilizing a range of proteins. Seems to fulfill an ATP-independent, HSP70-like function in archaeal de novo protein folding. The polypeptide is Prefoldin subunit alpha (Methanopyrus kandleri (strain AV19 / DSM 6324 / JCM 9639 / NBRC 100938)).